Reading from the N-terminus, the 494-residue chain is Alpha-amylase-related protein (494 aa).

An N-terminal signal peptide occupies residues 1 to 20 (MIKFALALTLCLAGASLSLA). The residue at position 21 (glutamine 21) is a Pyrrolidone carboxylic acid. Cysteine 48 and cysteine 104 form a disulfide bridge. The Ca(2+) site is built by asparagine 118, glutamine 169, and aspartate 178. Cysteines 157 and 171 form a disulfide. Arginine 206 lines the chloride pocket. Aspartate 208 (nucleophile) is an active-site residue. Ca(2+) is bound at residue histidine 212. Residue glutamate 245 is the Proton donor of the active site. Chloride is bound by residues asparagine 308 and arginine 343. 3 cysteine pairs are disulfide-bonded: cysteine 376–cysteine 382, cysteine 418–cysteine 441, and cysteine 448–cysteine 460.

It belongs to the glycosyl hydrolase 13 family. In terms of assembly, monomer. It depends on Ca(2+) as a cofactor. Chloride is required as a cofactor.

It is found in the secreted. The catalysed reaction is Endohydrolysis of (1-&gt;4)-alpha-D-glucosidic linkages in polysaccharides containing three or more (1-&gt;4)-alpha-linked D-glucose units.. The protein is Alpha-amylase-related protein (Amyrel) of Drosophila kikkawai (Fruit fly).